Consider the following 101-residue polypeptide: Large ribosomal subunit protein P1 (101 aa).

A compositionally biased stretch (low complexity) spans 61–72 (AAPAAAAAPAAA). The tract at residues 61–101 (AAPAAAAAPAAAEEAEEEAEEEEEEEEAEEEAAAGLGALFG) is disordered. Residues 73–92 (EEAEEEAEEEEEEEEAEEEA) show a composition bias toward acidic residues.

This sequence belongs to the eukaryotic ribosomal protein P1/P2 family. As to quaternary structure, part of the 50S ribosomal subunit. Homodimer, it forms part of the ribosomal stalk which helps the ribosome interact with GTP-bound translation factors. Forms a heptameric uL10/P0(P1)2(P1)2(P1)2 complex, where uL10/P0 forms an elongated spine to which the P1 dimers bind in a sequential fashion.

Functionally, forms part of the ribosomal stalk, playing a central role in the interaction of the ribosome with GTP-bound translation factors. The chain is Large ribosomal subunit protein P1 from Methanothermobacter thermautotrophicus (strain ATCC 29096 / DSM 1053 / JCM 10044 / NBRC 100330 / Delta H) (Methanobacterium thermoautotrophicum).